A 250-amino-acid polypeptide reads, in one-letter code: MGNLKTLLESRFKKNTPTKMEALARKRMEGDPSPLAVRLSNPTLSSKEKEQLRHLLQHYNFREQIEEPDLTQLCTLSAEVKQIHHQSVLLHGERITKVRDLLKSYREGAFSSWLLLTYGNRQTPYNFLVYYELFTLLPEPLKIEMEKMPRQAVYTLASRQGPQEKKEEIIRNYRGERKSELLDRIRKEFPLVETDCRKTSPVKQALAMLTKGSQILTKCTSLSSDEQIILEKLIKKLEKVKSNLFPDTKV.

This sequence belongs to the UPF0137 (pGP6-D) family.

In Chlamydia pneumoniae (Chlamydophila pneumoniae), this protein is Virulence plasmid protein pGP6-D-related protein.